Reading from the N-terminus, the 252-residue chain is tRNA (guanine-N(7)-)-methyltransferase (252 aa).

Residues E51, D76, N103, and D125 each contribute to the S-adenosyl-L-methionine site. Residue D125 is part of the active site. Substrate is bound by residues K129, D159, and 199-202 (TYYE).

The protein belongs to the class I-like SAM-binding methyltransferase superfamily. TrmB family.

The enzyme catalyses guanosine(46) in tRNA + S-adenosyl-L-methionine = N(7)-methylguanosine(46) in tRNA + S-adenosyl-L-homocysteine. Its pathway is tRNA modification; N(7)-methylguanine-tRNA biosynthesis. Its function is as follows. Catalyzes the formation of N(7)-methylguanine at position 46 (m7G46) in tRNA. The chain is tRNA (guanine-N(7)-)-methyltransferase from Bacteroides fragilis (strain YCH46).